Consider the following 417-residue polypeptide: Phosphoglycerate kinase 2 (417 aa).

An N-acetylserine modification is found at serine 2. Serine 2 and serine 4 each carry phosphoserine. N6-acetyllysine is present on lysine 11. (2R)-3-phosphoglycerate is bound by residues valine 23, aspartate 24, phenylalanine 25, asparagine 26, glutamine 38, and arginine 39. N6-acetyllysine is present on lysine 48. 4 residues coordinate (2R)-3-phosphoglycerate: serine 62, histidine 63, glycine 65, and arginine 66. An N6-acetyllysine mark is found at lysine 75, lysine 86, and lysine 97. Residues leucine 122 and arginine 123 each coordinate (2R)-3-phosphoglycerate. N6-acetyllysine is present on residues lysine 131 and lysine 146. Residues histidine 170 and arginine 171 each contribute to the (2R)-3-phosphoglycerate site. At tyrosine 196 the chain carries Phosphotyrosine. At lysine 199 the chain carries N6-acetyllysine. Glycine 214 contacts ADP. A CDP-binding site is contributed by glycine 214. The AMP site is built by alanine 215 and lysine 216. Residue alanine 215 coordinates ATP. Alanine 215 is a Mg(2+) binding site. Residues alanine 218 and aspartate 219 each coordinate Mg(2+). Aspartate 219 contributes to the CDP binding site. Lysine 220 contacts AMP. Residue lysine 220 participates in ATP binding. Glycine 238 contacts ADP. Glycine 238 provides a ligand contact to CDP. Glycine 239 is a binding site for AMP. Glycine 239 contacts ATP. An N6-acetyllysine mark is found at lysine 267 and lysine 291. Glycine 313 contacts AMP. Residue glycine 313 participates in ATP binding. CDP contacts are provided by glycine 338, valine 340, and phenylalanine 343. Phenylalanine 343 contacts ADP. Glutamate 344 contributes to the AMP binding site. ATP contacts are provided by glutamate 344, aspartate 375, and threonine 376. Position 375 (aspartate 375) interacts with Mg(2+).

This sequence belongs to the phosphoglycerate kinase family. Monomer. It depends on Mg(2+) as a cofactor.

Its subcellular location is the cytoplasm. It carries out the reaction (2R)-3-phosphoglycerate + ATP = (2R)-3-phospho-glyceroyl phosphate + ADP. It functions in the pathway carbohydrate degradation; glycolysis; pyruvate from D-glyceraldehyde 3-phosphate: step 2/5. Essential for sperm motility and male fertility but is not required for the completion of spermatogenesis. This chain is Phosphoglycerate kinase 2 (PGK2), found in Equus caballus (Horse).